Consider the following 372-residue polypeptide: L-selectin (372 aa).

Residues 1–28 form the signal peptide; it reads MIFPWKCQSTQRDLCNIFKLWGWTMLCC. The propeptide occupies 29–38; sequence DFLAHHGTDC. Residues 39–332 are Extracellular-facing; it reads WTYHYSEKPM…FSMIKEGDYN (294 aa). In terms of domain architecture, C-type lectin spans 55-155; sequence RFCRENYTDL…ACHKLKAALC (101 aa). 10 disulfides stabilise this stretch: C57–C155, C128–C147, C128–C160, C160–C171, C165–C180, C182–C191, C197–C241, C227–C254, C259–C303, and C289–C316. N60 and N104 each carry an N-linked (GlcNAc...) asparagine glycan. Ca(2+) contacts are provided by E118, N120, E126, N143, and D144. In terms of domain architecture, EGF-like spans 156-192; the sequence is YTASCQPWSCSGHGECVEIINNYTCNCDVGYYGPQCQ. Residue N177 is glycosylated (N-linked (GlcNAc...) asparagine). Sushi domains lie at 195-256 and 257-318; these read IQCE…TCQV and IQCE…ICQK. 5 N-linked (GlcNAc...) asparagine glycosylation sites follow: N216, N226, N232, N246, and N271. Residues 333–355 form a helical membrane-spanning segment; that stretch reads PLFIPVAVMVTAFSGLAFIIWLA. The Cytoplasmic portion of the chain corresponds to 356–372; it reads RRLKKGKKSKKSMDDPY.

The protein belongs to the selectin/LECAM family. Interaction with SELPLG/PSGL1 and PODXL2 is required for promoting recruitment and rolling of leukocytes. This interaction is dependent on the sialyl Lewis X glycan modification of SELPLG and PODXL2, and tyrosine sulfation modifications of SELPLG. Sulfation on 'Tyr-51' of SELPLG is important for L-selectin binding. In terms of processing, N-glycosylated.

It localises to the cell membrane. In terms of biological role, calcium-dependent lectin that mediates cell adhesion by binding to glycoproteins on neighboring cells. Mediates the adherence of lymphocytes to endothelial cells of high endothelial venules in peripheral lymph nodes. Promotes initial tethering and rolling of leukocytes in endothelia. This chain is L-selectin (SELL), found in Pongo pygmaeus (Bornean orangutan).